Here is a 526-residue protein sequence, read N- to C-terminus: Putative D-lactate dehydrogenase C713.03, mitochondrial (526 aa).

The FAD-binding PCMH-type domain maps to 93–272 (YRGKTQLALK…TKLSVICPKR (180 aa)).

This sequence belongs to the FAD-binding oxidoreductase/transferase type 4 family. FAD is required as a cofactor.

The protein localises to the mitochondrion matrix. The catalysed reaction is (R)-lactate + 2 Fe(III)-[cytochrome c] = 2 Fe(II)-[cytochrome c] + pyruvate + 2 H(+). The sequence is that of Putative D-lactate dehydrogenase C713.03, mitochondrial from Schizosaccharomyces pombe (strain 972 / ATCC 24843) (Fission yeast).